A 278-amino-acid polypeptide reads, in one-letter code: Putative pyruvate, phosphate dikinase regulatory protein (278 aa).

149–156 (GVSRSSKT) is a binding site for ADP.

This sequence belongs to the pyruvate, phosphate/water dikinase regulatory protein family. PDRP subfamily.

It carries out the reaction N(tele)-phospho-L-histidyl/L-threonyl-[pyruvate, phosphate dikinase] + ADP = N(tele)-phospho-L-histidyl/O-phospho-L-threonyl-[pyruvate, phosphate dikinase] + AMP + H(+). It catalyses the reaction N(tele)-phospho-L-histidyl/O-phospho-L-threonyl-[pyruvate, phosphate dikinase] + phosphate + H(+) = N(tele)-phospho-L-histidyl/L-threonyl-[pyruvate, phosphate dikinase] + diphosphate. In terms of biological role, bifunctional serine/threonine kinase and phosphorylase involved in the regulation of the pyruvate, phosphate dikinase (PPDK) by catalyzing its phosphorylation/dephosphorylation. In Erythrobacter litoralis (strain HTCC2594), this protein is Putative pyruvate, phosphate dikinase regulatory protein.